An 891-amino-acid polypeptide reads, in one-letter code: MSGVNEIRSTFLNFFAANGHEIVPSSPLVPRNDPTLMFTNAGMVQFKNVFTGVEKRPYHRATTSQKCVRAGGKHNDLDNVGYTARHHTFFEMLGNFSFGDYFKENAIELAWKLVTKEFGLPKDKLTATVYIDDDEAFGLWKKIAGLPESRIIRIAGSDNFWQMGDTGPCGPCSEIFYDHGDKIWGGPPGSAEADGDRFIEIWNLVFMQYEQLEGGVRNPLPKPSIDTGAGLERVAAVLQGKHDNYDIDLFVALIRAIADLTNADPQGPQKASLRVIADHLRASSFLISDGVLPSNEGRGYVLRRIMRRAMRHAQLLGAREPLMHKLVGALTREMGQAYPELIRAEGLIKETLRLEETRFRKTLERGLAILDEKSASLSKGDMFDGDVAFTLYDTYGFPLDLTQDALKSRGISVDQASFTDAMERQKAKARAAWAGSGEAATETVWFPLREKLGATEFLGYETETAEGAVTALVKDGAEVDSLKAGESGAIVLNQTPFYGESGGQVGDTGVLTGEGVRVRITDTQKKAGDLFAHIGTVEQGTLKLGTPLQLDVDHIRRSAIRANHSATHILHEALRQVLGDHIAQRGSLVSPDRLRFDFVHPKPITAEELARVEDIANDVVLENAEVTTRLMGLDDAREAGARALFGEKYGDEVRVVSMGNAARDHGNNAMGWSVELCGGTHVKRTGDIGLIAVTSESAVASGVRRIEALTARGARAHANHNLSLAKAAAAELRTTVDEVPARITALMEERKKLERELSDARKKLAMGGGAAAGGAAAGIREVAGIKLMARAVDGVEVKDLKSLVDEAKKQLGSGVVAIVGRSEDGKAGVVVGVTADLTARFNAVELVRAASEALGGKGGGGRPDMAQAGGPDGAKAEAALAAIESAIGKAG.

Zn(2+)-binding residues include H564, H568, C677, and H681.

It belongs to the class-II aminoacyl-tRNA synthetase family. The cofactor is Zn(2+).

The protein resides in the cytoplasm. It carries out the reaction tRNA(Ala) + L-alanine + ATP = L-alanyl-tRNA(Ala) + AMP + diphosphate. Functionally, catalyzes the attachment of alanine to tRNA(Ala) in a two-step reaction: alanine is first activated by ATP to form Ala-AMP and then transferred to the acceptor end of tRNA(Ala). Also edits incorrectly charged Ser-tRNA(Ala) and Gly-tRNA(Ala) via its editing domain. The polypeptide is Alanine--tRNA ligase (Bradyrhizobium sp. (strain ORS 278)).